Here is a 464-residue protein sequence, read N- to C-terminus: Asparagine--tRNA ligase (464 aa).

It belongs to the class-II aminoacyl-tRNA synthetase family. As to quaternary structure, homodimer.

The protein resides in the cytoplasm. The catalysed reaction is tRNA(Asn) + L-asparagine + ATP = L-asparaginyl-tRNA(Asn) + AMP + diphosphate + H(+). This chain is Asparagine--tRNA ligase, found in Acetivibrio thermocellus (strain ATCC 27405 / DSM 1237 / JCM 9322 / NBRC 103400 / NCIMB 10682 / NRRL B-4536 / VPI 7372) (Clostridium thermocellum).